Consider the following 146-residue polypeptide: Cytochrome c' (146 aa).

Residues M1–A21 form the signal peptide. 6 residues coordinate heme c: R29, T86, A87, C134, C137, and H138.

As to quaternary structure, monomer. Post-translationally, binds 1 heme c group covalently per subunit.

In terms of biological role, cytochrome c' is the most widely occurring bacterial c-type cytochrome. Cytochromes c' are high-spin proteins and the heme has no sixth ligand. Their exact function is not known. The sequence is that of Cytochrome c' (cycA) from Rhodopseudomonas palustris (strain ATCC BAA-98 / CGA009).